The sequence spans 1273 residues: MVKLAEFSRTATFAWSHDKIPLLVSGTVSGTVDANFSTDSSLELWSLLAADSEKPIASLQVDSKFNDLDWSHNNKIIAGALDNGSLELYSTNEANNAINSMARFSNHSSSVKTVKFNAKQDNVLASGGNNGEIFIWDMNKCTESPSNYTPLTPGQSMSSVDEVISLAWNQSLAHVFASAGSSNFASIWDLKAKKEVIHLSYTSPNSGIKQQLSVVEWHPKNSTRVATATGSDNDPSILIWDLRNANTPLQTLNQGHQKGILSLDWCHQDEHLLLSSGRDNTVLLWNPESAEQLSQFPARGNWCFKTKFAPEAPDLFACASFDNKIEVQTLQNLTNTLDEQETETKQQESETDFWNNVSREESKEKPTVFHLQAPTWYGEPSPAAHWAFGGKLVQITPDGKGVSITNPKISGLESNTTLSEALKTKDFKPLINQRLVKVIDDVNEEDWNLLEKLSMDGTEEFLKEALAFDNDESDAQDDANNEKEDDGEEFFQQIETNFQPEGDFSLSGNIEQTISKNLVSGNIKSAVKNSLENDLLMEAMVIALDSNNERLKESVKNAYFAKYGSKSSLSRILYSISKREVDDLVENLDVSQWKFISKAIQNLYPNDIAQRNEMLIKLGDRLKENGHRQDSLTLYLAAGSLDKVASIWLSEFPDLEDKLKKDNKTIYEAHSECLTEFIERFTVFSNFINGSSTINNEQLIAKFLEFINLTTSTGNFELATEFLNSLPSDNEEVKTEKARVLIASGKSLPAQNPATATTSKAKYTNAKTNKNVPVLPTPGMPSTTSIPSMQAPFYGMTPGASANALPPKPYVPATTTSAPVHTEGKYAPPSQPSMASPFVNKTNSSTRLNSFAPPPNPYATATVPATNVSTTSIPQNTFAPIQPGMPIMGDYNAQSSSIPSQPPINAVSGQTPHLNRKANDGWNDLPLKVKEKPSRAKAVSVAPPNILSTPTPLNGIPANAASTMPPPPLSRAPSSVSMVSPPPLHKNSRVPSLVATSESPRASISNPYAPPQSSQQFPIGTISTANQTSNTAQVASSNPYAPPPQQRVATPLSGGVPPAPLPKASNPYAPTATTQPNGSSYPPTGPYTNNHTMTSPPPVFNKPPTGPPPISMKKRSNKLASIEQNPSQGATYPPTLSSSASPLQPSQPPTLASQVNTSAENVSHEIPADQQPIVDFLKEELARVTPLTPKEYSKQLKDCDKRLKILFYHLEKQDLLTQPTIDCLHDLVALMKEKKYKEAMVIHANIATNHAQEGGNWLTGVKRLIGIAEATLN.

WD repeat units follow at residues 6 to 46, 60 to 99, 106 to 146, 158 to 198, 207 to 250, 255 to 295, and 298 to 338; these read EFSR…ELWS, QVDS…NAIN, NHSS…ESPS, SSVD…EVIH, GIKQ…TPLQ, GHQK…QLSQ, and ARGN…NTLD. A Phosphoserine modification is found at serine 349. The stretch at 385–405 is one WD 8; interaction with SEC13 repeat; it reads HWAFGGKLVQITPDGKGVSIT. Positions 815-835 are disordered; the sequence is TTSAPVHTEGKYAPPSQPSMA. Phosphoserine is present on residues serine 836, serine 974, serine 977, serine 980, serine 988, serine 992, and serine 999. The tract at residues 933 to 1162 is disordered; sequence PSRAKAVSVA…SQVNTSAENV (230 aa). A compositionally biased stretch (polar residues) spans 994–1039; sequence VATSESPRASISNPYAPPQSSQQFPIGTISTANQTSNTAQVASSNP. Position 1050 is a phosphothreonine (threonine 1050). Serine 1053 bears the Phosphoserine mark. Positions 1071-1094 are enriched in polar residues; it reads TATTQPNGSSYPPTGPYTNNHTMT. The segment covering 1095–1110 has biased composition (pro residues); sequence SPPPVFNKPPTGPPPI. Residues 1118 to 1129 are compositionally biased toward polar residues; the sequence is KLASIEQNPSQG. Residues 1130–1154 are compositionally biased toward low complexity; the sequence is ATYPPTLSSSASPLQPSQPPTLASQ.

This sequence belongs to the WD repeat SEC31 family. As to quaternary structure, the COPII coat is composed of at least 5 proteins: the SEC23/24 complex, the SEC13/31 complex, and the protein SAR1. SEC13 and SEC31 make a 2:2 tetramer that forms the edge element of the COPII outer coat. The tetramer self-assembles in multiple copies to form the complete polyhedral cage. Interacts (via WD 8) with SEC13. Interacts with EMP24, ERV25, SEC16 and SHR3.

The protein resides in the cytoplasmic vesicle. It is found in the COPII-coated vesicle membrane. Its subcellular location is the endoplasmic reticulum membrane. Functionally, component of the coat protein complex II (COPII) which promotes the formation of transport vesicles from the endoplasmic reticulum (ER). The coat has two main functions, the physical deformation of the endoplasmic reticulum membrane into vesicles and the selection of cargo molecules. In Saccharomyces cerevisiae (strain ATCC 204508 / S288c) (Baker's yeast), this protein is Protein transport protein SEC31 (SEC31).